The following is a 279-amino-acid chain: Cholesterol 25-hydroxylase-like protein 2 (279 aa).

2 N-linked (GlcNAc...) asparagine glycosylation sites follow: N6 and N13. The next 3 membrane-spanning stretches occupy residues 36-56 (LFPV…YTVL), 86-106 (LALT…AQWL), and 120-140 (LTAF…QYYL). The region spanning 128-262 (VGCTVVFDFQ…FAHWDWLGGT (135 aa)) is the Fatty acid hydroxylase domain. The short motif at 141–145 (WHLLH) is the Histidine box-1 element. Residues 156-160 (HALHH) carry the Histidine box-2 motif. 2 membrane-spanning segments follow: residues 165–185 (TFSL…GFWT) and 189–209 (PLLL…NIWV). A Histidine box-3 motif is present at residues 237–243 (RHDAHHQ).

Belongs to the sterol desaturase family. Fe cation serves as cofactor.

The protein localises to the endoplasmic reticulum membrane. In terms of biological role, may catalyze the formation of 25-hydroxycholesterol from cholesterol. The polypeptide is Cholesterol 25-hydroxylase-like protein 2 (Danio rerio (Zebrafish)).